Here is a 324-residue protein sequence, read N- to C-terminus: Aldo-keto reductase family 1 member A1 (324 aa).

At S3 the chain carries Phosphoserine. NADP(+) is bound by residues 10-19 (GQKMPLIGLG), T20, and W21. Position 37 is a phosphoserine (S37). D44 serves as a coordination point for NADP(+). The active-site Proton donor is the Y49. K126 is subject to N6-acetyllysine; alternate. K126 is modified (N6-succinyllysine; alternate). Residue K144 is modified to N6-succinyllysine. NADP(+)-binding residues include S161, N162, S210, L212, S214, S215, K262, S263, I264, T265, R268, Q271, and N272. S210 is subject to Phosphoserine.

This sequence belongs to the aldo/keto reductase family.

Its subcellular location is the cytoplasm. It is found in the cytosol. The protein localises to the apical cell membrane. The catalysed reaction is a primary alcohol + NADP(+) = an aldehyde + NADPH + H(+). The enzyme catalyses L-gulonate + NADP(+) = aldehydo-D-glucuronate + NADPH + H(+). It carries out the reaction L-gulono-1,4-lactone + NADP(+) = D-glucurono-3,6-lactone + NADPH + H(+). It catalyses the reaction allyl alcohol + NADP(+) = acrolein + NADPH + H(+). The catalysed reaction is glycerol + NADP(+) = D-glyceraldehyde + NADPH + H(+). The enzyme catalyses glycerol + NADP(+) = L-glyceraldehyde + NADPH + H(+). It carries out the reaction hydroxyacetone + NADP(+) = methylglyoxal + NADPH + H(+). It catalyses the reaction 3-deoxyfructose + NADP(+) = 3-deoxyglucosone + NADPH + H(+). The catalysed reaction is (R)-mevalonate + NADP(+) = (R)-mevaldate + NADPH + H(+). The enzyme catalyses S-nitroso-CoA + NADPH + H(+) = sulfinamide-CoA + NADP(+). It carries out the reaction S-nitrosoglutathione + NADPH + H(+) = S-(hydroxysulfenamide)glutathione + NADP(+). In terms of biological role, catalyzes the NADPH-dependent reduction of a wide variety of carbonyl-containing compounds to their corresponding alcohols. Displays enzymatic activity towards endogenous metabolites such as aromatic and aliphatic aldehydes, ketones, monosaccharides and bile acids, with a preference for negatively charged substrates, such as glucuronate and succinic semialdehyde. Plays an important role by catalyzing the reduction of D-glucuronic acid and D-glucurono-gamma-lactone. Functions as a detoxifiying enzyme by reducing a range of toxic aldehydes. Reduces methylglyoxal and 3-deoxyglucosone, which are present at elevated levels under hyperglycemic conditions and are cytotoxic. Involved also in the detoxification of lipid-derived aldehydes like acrolein. Plays a role in the activation of procarcinogens, such as polycyclic aromatic hydrocarbon trans-dihydrodiols, and in the metabolism of various xenobiotics and drugs. Also acts as an inhibitor of protein S-nitrosylation by mediating degradation of S-nitroso-coenzyme A (S-nitroso-CoA), a cofactor required to S-nitrosylate proteins. S-nitroso-CoA reductase activity is involved in reprogramming intermediary metabolism in renal proximal tubules, notably by inhibiting protein S-nitrosylation of isoform 2 of PKM (PKM2). Also acts as a S-nitroso-glutathione reductase by catalyzing the NADPH-dependent reduction of S-nitrosoglutathione. Displays no reductase activity towards retinoids. This is Aldo-keto reductase family 1 member A1 (AKR1A1) from Cricetulus griseus (Chinese hamster).